A 264-amino-acid chain; its full sequence is Small ribosomal subunit protein eS4 (264 aa).

An S4 RNA-binding domain is found at 42–104 (LPLVIIMRNR…TNENFRLLYD (63 aa)).

This sequence belongs to the eukaryotic ribosomal protein eS4 family.

The protein resides in the cytoplasm. This Solanum tuberosum (Potato) protein is Small ribosomal subunit protein eS4 (RPS4).